The sequence spans 507 residues: Histidine ammonia-lyase (507 aa).

The 5-imidazolinone (Ala-Gly) cross-link spans 145 to 147; it reads ASG. S146 carries the post-translational modification 2,3-didehydroalanine (Ser).

It belongs to the PAL/histidase family. In terms of processing, contains an active site 4-methylidene-imidazol-5-one (MIO), which is formed autocatalytically by cyclization and dehydration of residues Ala-Ser-Gly.

It localises to the cytoplasm. It catalyses the reaction L-histidine = trans-urocanate + NH4(+). Its pathway is amino-acid degradation; L-histidine degradation into L-glutamate; N-formimidoyl-L-glutamate from L-histidine: step 1/3. The polypeptide is Histidine ammonia-lyase (Treponema denticola (strain ATCC 35405 / DSM 14222 / CIP 103919 / JCM 8153 / KCTC 15104)).